We begin with the raw amino-acid sequence, 49 residues long: uncharacterized protein (49 aa).

This is an uncharacterized protein from Sinorhizobium fredii (strain NBRC 101917 / NGR234).